The sequence spans 421 residues: ATP-dependent RNA helicase RhlB (421 aa).

Residues 9 to 37 carry the Q motif motif; that stretch reads QKFSDFALHPKVVEVLEKKGFHNCTPIQA. In terms of domain architecture, Helicase ATP-binding spans 40-219; the sequence is LPLTLAGRDV…FEQMNNAEYI (180 aa). 53–60 serves as a coordination point for ATP; the sequence is AQTGTGKT. The DEAD box signature appears at 165–168; the sequence is DEAD. A Helicase C-terminal domain is found at 245–390; it reads RLLQTLIEEE…VSKYNPDALM (146 aa). The tract at residues 392–421 is disordered; sequence DLPKPLRLTRPRTGNGPRRTGAPRNRRRSG. Positions 402–414 are enriched in low complexity; sequence PRTGNGPRRTGAP.

It belongs to the DEAD box helicase family. RhlB subfamily. Component of the RNA degradosome, which is a multiprotein complex involved in RNA processing and mRNA degradation.

Its subcellular location is the cytoplasm. It carries out the reaction ATP + H2O = ADP + phosphate + H(+). Functionally, DEAD-box RNA helicase involved in RNA degradation. Has RNA-dependent ATPase activity and unwinds double-stranded RNA. This is ATP-dependent RNA helicase RhlB from Shigella boydii serotype 18 (strain CDC 3083-94 / BS512).